A 565-amino-acid polypeptide reads, in one-letter code: Proline--tRNA ligase (565 aa).

This sequence belongs to the class-II aminoacyl-tRNA synthetase family. ProS type 1 subfamily. In terms of assembly, homodimer.

It localises to the cytoplasm. It carries out the reaction tRNA(Pro) + L-proline + ATP = L-prolyl-tRNA(Pro) + AMP + diphosphate. Catalyzes the attachment of proline to tRNA(Pro) in a two-step reaction: proline is first activated by ATP to form Pro-AMP and then transferred to the acceptor end of tRNA(Pro). As ProRS can inadvertently accommodate and process non-cognate amino acids such as alanine and cysteine, to avoid such errors it has two additional distinct editing activities against alanine. One activity is designated as 'pretransfer' editing and involves the tRNA(Pro)-independent hydrolysis of activated Ala-AMP. The other activity is designated 'posttransfer' editing and involves deacylation of mischarged Ala-tRNA(Pro). The misacylated Cys-tRNA(Pro) is not edited by ProRS. This chain is Proline--tRNA ligase, found in Francisella tularensis subsp. novicida (strain U112).